Consider the following 144-residue polypeptide: Sentan (144 aa).

A disordered region spans residues Met1–Met31. Residues Pro18–Ala29 show a composition bias toward low complexity.

This sequence belongs to the S-100 family.

The protein resides in the cell projection. It localises to the cilium. Functionally, may be a component of the linker structure that bridges the ciliary membrane and peripheral singlet microtubules. This Gallus gallus (Chicken) protein is Sentan.